The primary structure comprises 540 residues: MLAELGACLLLAMVLLDSDPGTQAMEGVKCGGVLSAPSGNFSSPNFPSLYPYNTECSWLIVVAEGSSVLLTFHAFDLEYHDTCGFDFLEIYNGASGDKGNLLGRFCGQVPPPPFTSSWHVMSVVFHSDKHVASRGFSAGYQKDVCGGVLTGLSGVLSSPEYPNNYPNNVECHWLIRASGPAAVKLVFVDFQVEGSDECMYDYVAVLGAPGPAHGHHYCGRTRPPTFVSLGHELQVVFKSDFNIGGRGFKAHYFSGECQEVFTAVRGNFSSPQYPGAYPNNIRCHWTIRLPPGYRVKVFILDLGLEEPNSLTRTCDFDHLAAFDGASEEAQLLGKWCGHHLPPPVTSSRNQVLLLLHTDRSTSGRGFSVAYIGVVPMNVSCSRTDFQILISAQALAPLERTKVYLGSRSCAAQEVGSNFRIQARFDTCGTESQRRNNTSVIVSVLYIDFSTAGHDDIHEYEVRCEPRRKEASAHLLSGSDLLGPYAATAEHLQEAPPGDEAEVLEGPGTMVTQDTSDIVFLGLCILAGVLMIIAIVVLMLL.

An N-terminal signal peptide occupies residues 1-24 (MLAELGACLLLAMVLLDSDPGTQA). Residues 25 to 516 (MEGVKCGGVL…GTMVTQDTSD (492 aa)) lie on the Extracellular side of the membrane. Intrachain disulfides connect cysteine 30-cysteine 56, cysteine 83-cysteine 106, cysteine 145-cysteine 171, cysteine 198-cysteine 218, cysteine 257-cysteine 283, and cysteine 314-cysteine 336. 3 CUB domains span residues 30–143 (CGGV…YQKD), 145–255 (CGGV…YFSG), and 257–373 (CQEV…YIGV). N-linked (GlcNAc...) asparagine glycosylation is present at asparagine 40. N-linked (GlcNAc...) asparagine glycosylation is present at asparagine 267. Asparagine 377, asparagine 435, and asparagine 436 each carry an N-linked (GlcNAc...) asparagine glycan. A helical transmembrane segment spans residues 517-537 (IVFLGLCILAGVLMIIAIVVL). Residues 538–540 (MLL) lie on the Cytoplasmic side of the membrane.

The protein resides in the membrane. This is CUB domain-containing protein 2 (Cdcp2) from Mus musculus (Mouse).